We begin with the raw amino-acid sequence, 415 residues long: Casein kinase I isoform delta (415 aa).

The 269-residue stretch at 9 to 277 (YRLGRKIGSG…YLRQLFRNLF (269 aa)) folds into the Protein kinase domain. ATP contacts are provided by residues 15–23 (IGSGSFGDI) and Lys-38. Asp-128 (proton acceptor) is an active-site residue. The interval 278–364 (HRQGFSYDYV…TSPRPVSGME (87 aa)) is centrosomal localization signal (CLS). Residues 301 to 315 (ADDAERERRDREERL) are compositionally biased toward basic and acidic residues. The tract at residues 301 to 415 (ADDAERERRD…SSGLQSVVHR (115 aa)) is disordered. Residues 317–342 (HSRNPATRGLPSTASGRLRGTQEVAP) are autoinhibitory. 2 positions are modified to phosphoserine: Ser-328 and Ser-331. Over residues 347-358 (TPTSHTANTSPR) the composition is skewed to polar residues. Phosphoserine is present on Ser-370. Residue Arg-375 is modified to Omega-N-methylarginine. A compositionally biased stretch (polar residues) spans 380 to 400 (NISSSDLTGRQDTSRMSTSQI). Residues Ser-382, Ser-383, Ser-384, Ser-407, and Ser-411 each carry the phosphoserine modification.

This sequence belongs to the protein kinase superfamily. CK1 Ser/Thr protein kinase family. Casein kinase I subfamily. Monomer. Component of the circadian core oscillator, which includes the CRY proteins, CLOCK, or NPAS2, ARTNL/BMAL1 or ARTNL2/BMAL2, CSNK1D and/or CSNK1E, TIMELESS and the PER proteins. Interacts with DNMT1 and MAP1A. Interacts directly with PER1 and PER2 which may lead to their degradation. Interacts with MAPT/TAU, SNAPIN, DBNDD2, AIB1/NCOA3 and ESR1. Interacts with AKAP9/AKAP450; this interaction promotes centrosomal subcellular location. Binds to tubulins in mitotic cells upon DNA damage. Interacts with GJA1. Interacts with DDX3X; this interaction enhances CSNK1D kinase activity in vitro, but it is unclear whether this interaction is physiologically relevant. Interacts with FAM83A, FAM83B, FAM83E and FAM83H (via DUF1669). Autophosphorylated on serine and threonine residues; this autophosphorylation represses activity. Reactivated by phosphatase-mediated dephosphorylation. May be dephosphorylated by PP1.

Its subcellular location is the cytoplasm. The protein localises to the nucleus. The protein resides in the cytoskeleton. It localises to the microtubule organizing center. It is found in the centrosome. Its subcellular location is the perinuclear region. The protein localises to the cell membrane. The protein resides in the spindle. It localises to the golgi apparatus. It catalyses the reaction L-seryl-[protein] + ATP = O-phospho-L-seryl-[protein] + ADP + H(+). The enzyme catalyses L-threonyl-[protein] + ATP = O-phospho-L-threonyl-[protein] + ADP + H(+). The catalysed reaction is L-seryl-[tau protein] + ATP = O-phospho-L-seryl-[tau protein] + ADP + H(+). It carries out the reaction L-threonyl-[tau protein] + ATP = O-phospho-L-threonyl-[tau protein] + ADP + H(+). Its activity is regulated as follows. Exhibits substrate-dependent heparin activation. Drug-mediated inhibition leads to a delay of the oscillations with the magnitude of this effect dependent upon the timing of drug administration. Inhibited by phosphorylation. Essential serine/threonine-protein kinase that regulates diverse cellular growth and survival processes including Wnt signaling, DNA repair and circadian rhythms. It can phosphorylate a large number of proteins. Casein kinases are operationally defined by their preferential utilization of acidic proteins such as caseins as substrates. Phosphorylates connexin-43/GJA1, MAP1A, SNAPIN, MAPT/TAU, TOP2A, DCK, HIF1A, EIF6, p53/TP53, DVL2, DVL3, ESR1, AIB1/NCOA3, DNMT1, PKD2, YAP1, PER1 and PER2. Central component of the circadian clock. In balance with PP1, determines the circadian period length through the regulation of the speed and rhythmicity of PER1 and PER2 phosphorylation. Controls PER1 and PER2 nuclear transport and degradation. YAP1 phosphorylation promotes its SCF(beta-TRCP) E3 ubiquitin ligase-mediated ubiquitination and subsequent degradation. DNMT1 phosphorylation reduces its DNA-binding activity. Phosphorylation of ESR1 and AIB1/NCOA3 stimulates their activity and coactivation. Phosphorylation of DVL2 and DVL3 regulates WNT3A signaling pathway that controls neurite outgrowth. Phosphorylates NEDD9/HEF1. EIF6 phosphorylation promotes its nuclear export. Triggers down-regulation of dopamine receptors in the forebrain. Activates DCK in vitro by phosphorylation. TOP2A phosphorylation favors DNA cleavable complex formation. May regulate the formation of the mitotic spindle apparatus in extravillous trophoblast. Modulates connexin-43/GJA1 gap junction assembly by phosphorylation. Probably involved in lymphocyte physiology. Regulates fast synaptic transmission mediated by glutamate. The chain is Casein kinase I isoform delta (CSNK1D) from Pongo abelii (Sumatran orangutan).